The primary structure comprises 363 residues: 3-isopropylmalate dehydrogenase (363 aa).

78–91 (GPKWENLPPESQPE) is an NAD(+) binding site. Residues R99, R109, R138, and D227 each coordinate substrate. Mg(2+)-binding residues include D227, D251, and D255. An NAD(+)-binding site is contributed by 285-297 (GSAPDIAGKNIAN).

The protein belongs to the isocitrate and isopropylmalate dehydrogenases family. LeuB type 1 subfamily. In terms of assembly, homodimer. It depends on Mg(2+) as a cofactor. The cofactor is Mn(2+).

It is found in the cytoplasm. It carries out the reaction (2R,3S)-3-isopropylmalate + NAD(+) = 4-methyl-2-oxopentanoate + CO2 + NADH. Its pathway is amino-acid biosynthesis; L-leucine biosynthesis; L-leucine from 3-methyl-2-oxobutanoate: step 3/4. In terms of biological role, catalyzes the oxidation of 3-carboxy-2-hydroxy-4-methylpentanoate (3-isopropylmalate) to 3-carboxy-4-methyl-2-oxopentanoate. The product decarboxylates to 4-methyl-2 oxopentanoate. The chain is 3-isopropylmalate dehydrogenase from Salmonella choleraesuis (strain SC-B67).